The chain runs to 299 residues: UDP-N-acetylenolpyruvoylglucosamine reductase (299 aa).

The region spanning 26-191 (GIGGPAKYFV…VSATFQLNAS (166 aa)) is the FAD-binding PCMH-type domain. Arginine 170 is an active-site residue. The Proton donor role is filled by cysteine 218. Glutamate 288 is an active-site residue.

This sequence belongs to the MurB family. The cofactor is FAD.

The protein localises to the cytoplasm. It catalyses the reaction UDP-N-acetyl-alpha-D-muramate + NADP(+) = UDP-N-acetyl-3-O-(1-carboxyvinyl)-alpha-D-glucosamine + NADPH + H(+). It functions in the pathway cell wall biogenesis; peptidoglycan biosynthesis. Functionally, cell wall formation. This chain is UDP-N-acetylenolpyruvoylglucosamine reductase, found in Protochlamydia amoebophila (strain UWE25).